Reading from the N-terminus, the 113-residue chain is U11-theraphotoxin-Hhn1n (113 aa).

Positions 1-21 are cleaved as a signal peptide; that stretch reads MNTVRVTFLLVFVLAVSLGQA. Positions 22-74 are excised as a propeptide; the sequence is DKDENRMEMQEKTEQGKSYLDFAENLLLQKLEELEAKLLEEDSEESRNSRQKR. Residues 60-69 are compositionally biased toward basic and acidic residues; sequence LEEDSEESRN. The segment at 60 to 83 is disordered; the sequence is LEEDSEESRNSRQKRCIGEGVPCD. Intrachain disulfides connect cysteine 75–cysteine 90 and cysteine 89–cysteine 110.

The protein belongs to the neurotoxin 14 (magi-1) family. 01 (HNTX-16) subfamily. Expressed by the venom gland.

The protein resides in the secreted. Its function is as follows. Probable ion channel inhibitor. The sequence is that of U11-theraphotoxin-Hhn1n from Cyriopagopus hainanus (Chinese bird spider).